Consider the following 435-residue polypeptide: NAD-specific glutamate dehydrogenase A (435 aa).

The tract at residues 1–28 (MTMASKSDSTHDESGDEAADSTEPESAL) is disordered. Acidic residues predominate over residues 14–23 (SGDEAADSTE). The active site involves lysine 126.

It belongs to the Glu/Leu/Phe/Val dehydrogenases family. In terms of assembly, homohexamer. Post-translationally, the N-terminus is blocked.

It catalyses the reaction L-glutamate + NAD(+) + H2O = 2-oxoglutarate + NH4(+) + NADH + H(+). With respect to regulation, inhibited by ethanol, acetone, acetonitrile and 2-propanol (65 to 70% inhibition) and to a lesser extent by methanol and dimethyl formamide (26 and 49 % inhibition respectively). No effect of glycerol or DMSO. The polypeptide is NAD-specific glutamate dehydrogenase A (gdhX) (Halobacterium salinarum (Halobacterium halobium)).